Consider the following 284-residue polypeptide: Bifunctional protein FolD (284 aa).

Residues 165–167 (GAS), Ser-190, and Ile-231 each bind NADP(+).

This sequence belongs to the tetrahydrofolate dehydrogenase/cyclohydrolase family. In terms of assembly, homodimer.

The enzyme catalyses (6R)-5,10-methylene-5,6,7,8-tetrahydrofolate + NADP(+) = (6R)-5,10-methenyltetrahydrofolate + NADPH. It catalyses the reaction (6R)-5,10-methenyltetrahydrofolate + H2O = (6R)-10-formyltetrahydrofolate + H(+). It functions in the pathway one-carbon metabolism; tetrahydrofolate interconversion. Catalyzes the oxidation of 5,10-methylenetetrahydrofolate to 5,10-methenyltetrahydrofolate and then the hydrolysis of 5,10-methenyltetrahydrofolate to 10-formyltetrahydrofolate. This Polynucleobacter asymbioticus (strain DSM 18221 / CIP 109841 / QLW-P1DMWA-1) (Polynucleobacter necessarius subsp. asymbioticus) protein is Bifunctional protein FolD.